The chain runs to 211 residues: tRNA (guanine-N(7)-)-methyltransferase (211 aa).

Glutamate 44, aspartate 69, aspartate 96, and aspartate 118 together coordinate S-adenosyl-L-methionine. Residue aspartate 118 is part of the active site. Lysine 122 provides a ligand contact to substrate. The interaction with RNA stretch occupies residues 124–129; the sequence is RHEKRR. Residues aspartate 154 and 191–194 each bind substrate; that span reads TEYE.

It belongs to the class I-like SAM-binding methyltransferase superfamily. TrmB family.

It carries out the reaction guanosine(46) in tRNA + S-adenosyl-L-methionine = N(7)-methylguanosine(46) in tRNA + S-adenosyl-L-homocysteine. The protein operates within tRNA modification; N(7)-methylguanine-tRNA biosynthesis. Its function is as follows. Catalyzes the formation of N(7)-methylguanine at position 46 (m7G46) in tRNA. The protein is tRNA (guanine-N(7)-)-methyltransferase of Streptococcus pneumoniae (strain JJA).